Here is a 953-residue protein sequence, read N- to C-terminus: MGLKDYYTWTFPNIPEHVAQELDQLGRSLVVVGVIGRSRCVLANKMRAFGMEPPVDHEPTDGQLQCYYKPGSSTLLLHFETTFDDAILGQQIDETMEQDGAPFDFDGFYERMKCRFVRMMLLALHVCHILVYVETGQTFDLSLVTIFQLMKFAREQHLMQFLPSLLKETPAGRLLGEKCRLCTPRILFLFENFTHEEGKTRECVSACEFQTEDSIYELLRHHQIITNSSSSSLLALPNNKQFVFYNAHDQLHADRLLQSIEFLNLDMRKLDVKEEEDDLEVLELAPFDGFVKSFGESFESTNYEEQQYKTEHTAWHFLQRHVQDALLGCFDEGSFKQVPQRGQLQLLNAQEWHDCIAELHKLLVSSAGTQESLNEIRNEDYQVFLQSFDESLNYEKKFWAHLCEIGLKMGIEAYKKAAPAIYGSSMHQQLLAEATLAFEEEGRGPPAEASIAKMTATCLRHWQDGRQQCEQLSLRSQPCTQPKEMPHDKHNSGVIHVSSCNCGRTQGRREDPFSLRQANYEFYEHMVKMCNLCVKVKQFKFPIFEPTNNEYRAAAFEVAFPLLHAGKNRLAQDAELDPDEEDEELPTGEREEQHITQSNGCSQPLSPTFGSDLNMSIAGFGVSLNESEPCFDQSSSSEAESTCSGTSSEESNNELVLQLKEPAKKHEESCDPDSIAPLPSMCLTSTTEYLPGLVHTLSKVGLLPLFPSWSLACVGPSSIYSHNTGLQEHFQSGFLSGANFLLPWDVQLRLVHASKHYHNSHQPHMSKKQQRYRKHGDRMVLKIFVGFEYECSRGHRFMMCRPDRVLRGGADIERDTCSKMVHTNMPLYYPCPCRSQNNYLAQLMRIHVVTPKAPVNIIVDPKVCMGKDKYTFTLGSMVPPRLSQSAYWILRLPYVYQGDDALIAPPEKLEPDDIMAGGYLLAGMFGIAETDPTLDLNDQGHLDTNELGTFTRI.

Disordered stretches follow at residues 571-604 (AQDAELDPDEEDEELPTGEREEQHITQSNGCSQP) and 629-653 (PCFDQSSSSEAESTCSGTSSEESNN). A compositionally biased stretch (acidic residues) spans 574–586 (AELDPDEEDEELP). Residues 595-604 (ITQSNGCSQP) are compositionally biased toward polar residues. Residues 634 to 653 (SSSSEAESTCSGTSSEESNN) are compositionally biased toward low complexity.

Belongs to the SMG8 family.

Its function is as follows. Involved in nonsense-mediated decay (NMD) of mRNAs containing premature stop codons. Probable component of kinase complex containing nonC and recruited to stalled ribosomes. This chain is Nonsense-mediated mRNA decay factor SMG8, found in Drosophila persimilis (Fruit fly).